Reading from the N-terminus, the 245-residue chain is MNVTLLIPARYGSSRFPGKPLAPINGKPMIQHVYERASLAKGLTNIYVATDDERIKSAVEGFGGKVVMTSPDAASGTDRINDAINQLGLKDDDLVINLQGDQPLIDPTSIEQVISLFERHPGEFEMATLGYEIVNKAELDDPMHVKMVFDNDYYALYFSRARIPFGRDTKDYPVYKHLGVYAYTRRFVQAFAALPLGRLEDLEKLEQLRALEYGHKIKVAISAFDSIEVDTPEDIRKCEQRLAVD.

The protein belongs to the KdsB family.

It localises to the cytoplasm. The enzyme catalyses 8-amino-3,8-dideoxy-alpha-D-manno-octulosonate + CTP = CMP-8-amino-3,8-dideoxy-alpha-D-manno-oct-2-ulosonate + diphosphate. It functions in the pathway bacterial outer membrane biogenesis; lipopolysaccharide biosynthesis. Its function is as follows. Activates KDO8N (a required 8-carbon sugar) for incorporation into bacterial lipopolysaccharide in the Shewanella genus. The sequence is that of 8-amino-3,8-dideoxy-manno-octulosonate cytidylyltransferase from Shewanella oneidensis (strain ATCC 700550 / JCM 31522 / CIP 106686 / LMG 19005 / NCIMB 14063 / MR-1).